A 294-amino-acid chain; its full sequence is Nucleotide-binding protein Cbei_4857 (294 aa).

8 to 15 (GLSGAGKT) is a binding site for ATP. 59-62 (DIRG) contributes to the GTP binding site.

This sequence belongs to the RapZ-like family.

Its function is as follows. Displays ATPase and GTPase activities. This chain is Nucleotide-binding protein Cbei_4857, found in Clostridium beijerinckii (strain ATCC 51743 / NCIMB 8052) (Clostridium acetobutylicum).